A 572-amino-acid chain; its full sequence is Fatty acid amide hydrolase 1 (572 aa).

The signal sequence occupies residues 1–14; that stretch reads MIFYLVLLVLGAIA. Positions 32-63 form a coiled coil; it reads IVAQRRRDDLSKNVEQARKAADKLDTQRRDWI. Catalysis depends on charge relay system residues Lys-139 and Ser-214. Substrate is bound by residues Ser-214 and 235–238; that span reads VGGS. The active-site Acyl-ester intermediate is Ser-238.

Belongs to the amidase family. Expressed in the pharynx, some pharyngeal neurons, the posterior intestine and anal depressor muscles.

The catalysed reaction is N-(5Z,8Z,11Z,14Z-eicosatetraenoyl)-ethanolamine + H2O = ethanolamine + (5Z,8Z,11Z,14Z)-eicosatetraenoate. It carries out the reaction (9Z)-octadecenamide + H2O = (9Z)-octadecenoate + NH4(+). The enzyme catalyses (5Z,8Z,11Z,14Z,17Z-eicosapentaenoyl) ethanolamine + H2O = (5Z,8Z,11Z,14Z,17Z)-eicosapentaenoate + ethanolamine. It catalyses the reaction N-(9Z-hexadecenoyl) ethanolamine + H2O = (9Z)-hexadecenoate + ethanolamine. The catalysed reaction is N-(9Z-octadecenoyl) ethanolamine + H2O = ethanolamine + (9Z)-octadecenoate. It carries out the reaction N-octadecanoyl ethanolamine + H2O = octadecanoate + ethanolamine. The enzyme catalyses N-docosanoyl-ethanolamine + H2O = docosanoate + ethanolamine. It catalyses the reaction N-(15Z-tetracosenoyl)-ethanolamine + H2O = (15Z)-tetracosenoate + ethanolamine. The catalysed reaction is N-hexadecanoylethanolamine + H2O = ethanolamine + hexadecanoate. It carries out the reaction N-(9Z,12Z-octadecadienoyl)-ethanolamine + H2O = ethanolamine + (9Z,12Z)-octadecadienoate. The enzyme catalyses (9Z)-octadecenoate + glycine = N-(9Z-octadecenoyl)glycine + H2O. It catalyses the reaction N-(5Z,8Z,11Z,14Z)-eicosatetraenoyl-glycine + H2O = (5Z,8Z,11Z,14Z)-eicosatetraenoate + glycine. The catalysed reaction is N-(5Z,8Z,11Z,14Z-eicosatetraenoyl)-L-serine + H2O = (5Z,8Z,11Z,14Z)-eicosatetraenoate + L-serine. Catalyzes the hydrolysis of endogenous amidated lipids like anandamide (AEA or N-(5Z,8Z,11Z,14Z-eicosatetraenoyl)-ethanolamine) and eicosapentaneoyl ethanolamide (EPEA or (5Z,8Z,11Z,14Z,17Z-eicosapentaenoyl) ethanolamine), as well as other fatty amides, to their corresponding fatty acids, thereby regulating the signaling functions of these molecules. EPEA promotes dauer formation and may constitute a signal of high nutrient availability. Breakdown of EPEA may promote lifespan extension when nutrient availability is high. Facilitates axon regeneration after injury by degradating inhibitory compounds such as AEA. FAAH cooperates with PM20D1 in the hydrolysis of amino acid-conjugated fatty acids such as N-fatty acyl glycine and N-fatty acyl-L-serine, thereby acting as a physiological regulator of specific subsets of intracellular, but not of extracellular, N-fatty acyl amino acids. The chain is Fatty acid amide hydrolase 1 from Caenorhabditis elegans.